We begin with the raw amino-acid sequence, 583 residues long: MAQDIKIMNLTKSSLEALNRNQMLSKKSSRKILKICMYAILTFAMCGVVLICLTAMSNSDGSLTQSGSHNQSGSLKGLSSTPGDGEILNKAEIETLRFIFSNYPHGNRDPTGDDVEKPADAALPNEEDQKVKIADAGKHIKLMKQYNEIVADMSEDNKEQLAKMLRELLKKKINERKKKREDPNGNNEEGKEVINISVPSFNYKRVSANQDDSDDEEEVSVAQIEGLFVNLKYASKFFNFMNKYKRSYKDINEQMEKYKNFKMNYLKIKKHNETNQMYKMKVNQFSDYSKKDFESYFRKLLPIPDHLKKKYVVPFSSMNNGKGKNVVTSSSGANLLADVPEILDYREKGIVHEPKDQGLCGSCWAFASVGNVECMYAKEHNKTILTLSEQEVVDCSKLNFGCDGGHPFYSFIYAIENGICMGDDYKYKAMDNLFCLNYRCKNKVTLSSVGGVKENELIRALNEVGPVSVNVGVTDDFSFYGGGIFNGTCTEELNHSVLLVGYGQVQSSKIFQEKNAYDDASGVTKKGALSYPSKADDGIQYYWIIKNSWSKFWGENGFMRISRNKEGDNVFCGIGVEVFYPIL.

Over 1 to 34 the chain is Cytoplasmic; that stretch reads MAQDIKIMNLTKSSLEALNRNQMLSKKSSRKILK. A propeptide spans 1–338 (activation peptide); the sequence is MAQDIKIMNL…SSSGANLLAD (338 aa). The chain crosses the membrane as a helical; Signal-anchor for type II membrane protein span at residues 35–55; that stretch reads ICMYAILTFAMCGVVLICLTA. Over 56–583 the chain is Lumenal; the sequence is MSNSDGSLTQ…IGVEVFYPIL (528 aa). A compositionally biased stretch (polar residues) spans 62 to 82; the sequence is SLTQSGSHNQSGSLKGLSSTP. 2 disordered regions span residues 62-83 and 104-125; these read SLTQ…STPG and PHGN…ALPN. N-linked (GlcNAc...) asparagine glycosylation is present at N70. The segment covering 106–119 has biased composition (basic and acidic residues); the sequence is GNRDPTGDDVEKPA. 2 N-linked (GlcNAc...) asparagine glycosylation sites follow: N195 and N272. Cystine bridges form between C360-C402, C395-C435, and C420-C440. C363 is a catalytic residue. N381 carries N-linked (GlcNAc...) asparagine glycosylation. N-linked (GlcNAc...) asparagine glycans are attached at residues N486 and N494. An intrachain disulfide couples C489 to C572. Catalysis depends on residues H495 and N547.

It belongs to the peptidase C1 family.

Its subcellular location is the membrane. Cysteine protease. This chain is Vivapain-1, found in Plasmodium vivax (strain Salvador I).